The sequence spans 350 residues: GTPase Obg (350 aa).

An Obg domain is found at 1–159; sequence MRFIDQTEIF…FRLHLELKLL (159 aa). In terms of domain architecture, OBG-type G spans 160–328; that stretch reads AEVGIIGLPN…LLQQVWEELD (169 aa). GTP-binding positions include 166-173, 191-195, 213-216, 280-283, and 309-311; these read GLPNAGKS, FTTLI, DIPG, NKID, and SAV. Mg(2+) contacts are provided by S173 and T193.

The protein belongs to the TRAFAC class OBG-HflX-like GTPase superfamily. OBG GTPase family. In terms of assembly, monomer. Mg(2+) is required as a cofactor.

Its subcellular location is the cytoplasm. Functionally, an essential GTPase which binds GTP, GDP and possibly (p)ppGpp with moderate affinity, with high nucleotide exchange rates and a fairly low GTP hydrolysis rate. Plays a role in control of the cell cycle, stress response, ribosome biogenesis and in those bacteria that undergo differentiation, in morphogenesis control. This Acaryochloris marina (strain MBIC 11017) protein is GTPase Obg.